The following is a 253-amino-acid chain: Ribosome maturation protein SBDS (253 aa).

The protein belongs to the SDO1/SBDS family. As to quaternary structure, associates with the 60S ribosomal subunit.

The protein resides in the cytoplasm. It localises to the nucleus. The protein localises to the nucleolus. Its subcellular location is the nucleoplasm. It is found in the cytoskeleton. The protein resides in the spindle. Its function is as follows. Required for the assembly of mature ribosomes and ribosome biogenesis. Together with K10C3.5b/EFL1, triggers the GTP-dependent release of ribosome maturation factors from 60S pre-ribosomes in the cytoplasm, thereby activating ribosomes for translation competence by allowing 80S ribosome assembly. Required for normal levels of protein synthesis. May play a role in cellular stress resistance. May play a role in cellular response to DNA damage. May play a role in cell proliferation. The sequence is that of Ribosome maturation protein SBDS (sbds-1) from Caenorhabditis elegans.